A 219-amino-acid polypeptide reads, in one-letter code: MGHPHPHPYAPAELHLPGFVPLQLSQAQILVPYLATSLFLLLAVWLISGRCSRRLSDTDRWLMCWWAFTGLTHIIIEGTFVFAPNFFSNQNPSYFDEVWKEYSKGDSRYVARDPATVTVEGITAVLEGPASLLAVYAIASGKSYSHILQFTVCLGQLYGCLVYFITAYLDGFNFWTSPFYFWAYFIGANSSWVVIPTMIAIRSWKKICAAFQGEKVKTK.

The next 4 helical transmembrane spans lie at Ile-29 to Gly-49, Leu-62 to Phe-82, Val-119 to Ala-139, and Phe-181 to Ile-201. Positions Thr-58–Ala-200 constitute an EXPERA domain.

Belongs to the EBP family.

Its subcellular location is the endoplasmic reticulum membrane. It carries out the reaction lathosterol = 5alpha-cholest-8-en-3beta-ol. It functions in the pathway steroid biosynthesis; sterol biosynthesis. Catalyzes the conversion of Delta(8)-sterols to their corresponding Delta(7)-isomers. The polypeptide is Probable 3-beta-hydroxysteroid-Delta(8),Delta(7)-isomerase (Oryza sativa subsp. japonica (Rice)).